A 1268-amino-acid polypeptide reads, in one-letter code: Vigilin (1268 aa).

Position 2 is an N-acetylserine (Ser2). Residue Thr8 is modified to Phosphothreonine. A phosphoserine mark is found at Ser11, Ser31, and Ser35. KH domains are found at residues 158 to 229 (PKEH…RLEV), 230 to 302 (EKAF…AVEV), 303 to 371 (KKSQ…SVAA), 372 to 442 (PSWL…EINI), 443 to 514 (DHKF…DLII), 515 to 588 (EQRF…SVPI), 589 to 660 (FKQF…EVSI), 661 to 734 (PAKL…DIRA), 735 to 807 (KPEY…SMLV), 808 to 880 (DPKH…ECAI), 881 to 979 (PQKF…EVEV), 980 to 1059 (PFDL…SVTV), 1060 to 1134 (DPKY…DVPL), and 1135 to 1209 (DHRV…ALQV). Thr295 and Thr296 each carry phosphothreonine. Ser317 bears the Phosphoserine mark. Phosphotyrosine is present on Tyr437. Ser645 carries the post-translational modification Phosphoserine. A disordered region spans residues 914 to 944 (ENAVHSTEPVVQENGDEAGEGREAKDCDPGS). Positions 932–944 (GEGREAKDCDPGS) are enriched in basic and acidic residues. Residue Lys991 is modified to N6-acetyllysine. The tract at residues 1233 to 1268 (WTASSSEKAPDMSSSEEFPSFGAQVAPKTLPWGPKR) is disordered. Residues 1234–1249 (TASSSEKAPDMSSSEE) are compositionally biased toward polar residues. 2 positions are modified to phosphoserine: Ser1247 and Ser1252.

It localises to the cytoplasm. Its subcellular location is the nucleus. Functionally, appears to play a role in cell sterol metabolism. It may function to protect cells from over-accumulation of cholesterol. The chain is Vigilin (HDLBP) from Homo sapiens (Human).